The sequence spans 113 residues: Protein translation factor SUI1 homolog 1 (113 aa).

Residues 1–24 (MSELDSQVPTAFDPFADANAEDSG) are disordered. At Ser2 the chain carries N-acetylserine.

Belongs to the SUI1 family.

Probably involved in translation. The chain is Protein translation factor SUI1 homolog 1 from Arabidopsis thaliana (Mouse-ear cress).